The following is a 237-amino-acid chain: Ribonuclease PH (237 aa).

Residues R86 and 124 to 126 (GTR) each bind phosphate.

Belongs to the RNase PH family. As to quaternary structure, homohexameric ring arranged as a trimer of dimers.

The enzyme catalyses tRNA(n+1) + phosphate = tRNA(n) + a ribonucleoside 5'-diphosphate. Functionally, phosphorolytic 3'-5' exoribonuclease that plays an important role in tRNA 3'-end maturation. Removes nucleotide residues following the 3'-CCA terminus of tRNAs; can also add nucleotides to the ends of RNA molecules by using nucleoside diphosphates as substrates, but this may not be physiologically important. Probably plays a role in initiation of 16S rRNA degradation (leading to ribosome degradation) during starvation. This is Ribonuclease PH from Cereibacter sphaeroides (strain KD131 / KCTC 12085) (Rhodobacter sphaeroides).